Reading from the N-terminus, the 877-residue chain is EF-hand domain-containing family member B (877 aa).

2 disordered regions span residues 1–47 (MCSF…GRKS) and 268–290 (AQQP…PDRI). 2 consecutive EF-hand domains span residues 605–640 (QNFD…ACLH) and 641–676 (LDEK…KDKT). The Ca(2+) site is built by D618, D622, E629, D654, D656, D658, and E665.

Microtubule inner protein component of sperm flagellar doublet microtubules. Interacts with STIM1 and ORAI1; the interactions take place upon Ca(2+)-store depletion and dissociate through a Ca(2+)-dependent mechanism. Interaction with STIM1 inhibits STIM1 interaction with SARAF. Expressed in trachea multiciliated cells.

It localises to the cytoplasm. Its subcellular location is the cytoskeleton. The protein resides in the cilium axoneme. It is found in the flagellum axoneme. In terms of biological role, microtubule inner protein (MIP) part of the dynein-decorated doublet microtubules (DMTs) in cilia axoneme, which is required for motile cilia beating. Cytosolic sensor for calcium, modulates the interaction of STIM1 and ORAI1 upon store depletion and the activation of store-operated Ca(2+) entry (SOCE) and NFAT translocation from cytosol to nucleus. The sequence is that of EF-hand domain-containing family member B from Bos taurus (Bovine).